Consider the following 202-residue polypeptide: Superoxide dismutase [Mn] (202 aa).

Residue His-27 coordinates Mn(2+). Phosphothreonine is present on residues Thr-34 and Thr-70. The Mn(2+) site is built by His-82, Asp-164, and His-168.

The protein belongs to the iron/manganese superoxide dismutase family. As to quaternary structure, homodimer; under aerobic conditions. Under anaerobic conditions it is a component of the so-called 'green protein' complex (GPC), which consists of at least two components, SodA and a nucleoside diphosphate kinase (NDK). It depends on Mn(2+) as a cofactor.

It localises to the cytoplasm. The catalysed reaction is 2 superoxide + 2 H(+) = H2O2 + O2. Functionally, destroys superoxide anion radicals which are normally produced within the cells and which are toxic to biological systems. Active only in homodimeric state. The polypeptide is Superoxide dismutase [Mn] (sodA) (Virgibacillus halodenitrificans (Bacillus halodenitrificans)).